Here is a 389-residue protein sequence, read N- to C-terminus: Chalcone synthase J (389 aa).

C164 is an active-site residue.

The protein belongs to the thiolase-like superfamily. Chalcone/stilbene synthases family.

The catalysed reaction is (E)-4-coumaroyl-CoA + 3 malonyl-CoA + 3 H(+) = 2',4,4',6'-tetrahydroxychalcone + 3 CO2 + 4 CoA. Its pathway is secondary metabolite biosynthesis; flavonoid biosynthesis. The primary product of this enzyme is 4,2',4',6'-tetrahydroxychalcone (also termed naringenin-chalcone or chalcone) which can under specific conditions spontaneously isomerize into naringenin. The chain is Chalcone synthase J (CHSJ) from Petunia hybrida (Petunia).